A 211-amino-acid polypeptide reads, in one-letter code: Small ribosomal subunit protein eS1 (211 aa).

It belongs to the eukaryotic ribosomal protein eS1 family.

This Methanothrix thermoacetophila (strain DSM 6194 / JCM 14653 / NBRC 101360 / PT) (Methanosaeta thermophila) protein is Small ribosomal subunit protein eS1.